A 292-amino-acid polypeptide reads, in one-letter code: Elongation factor Ts (292 aa).

The segment at 80-83 (TDSV) is involved in Mg(2+) ion dislocation from EF-Tu.

It belongs to the EF-Ts family.

The protein localises to the cytoplasm. Its function is as follows. Associates with the EF-Tu.GDP complex and induces the exchange of GDP to GTP. It remains bound to the aminoacyl-tRNA.EF-Tu.GTP complex up to the GTP hydrolysis stage on the ribosome. This is Elongation factor Ts from Lactiplantibacillus plantarum (strain ATCC BAA-793 / NCIMB 8826 / WCFS1) (Lactobacillus plantarum).